We begin with the raw amino-acid sequence, 153 residues long: 3-hydroxyacyl-[acyl-carrier-protein] dehydratase FabZ (153 aa).

His-54 is an active-site residue.

The protein belongs to the thioester dehydratase family. FabZ subfamily.

Its subcellular location is the cytoplasm. The enzyme catalyses a (3R)-hydroxyacyl-[ACP] = a (2E)-enoyl-[ACP] + H2O. In terms of biological role, involved in unsaturated fatty acids biosynthesis. Catalyzes the dehydration of short chain beta-hydroxyacyl-ACPs and long chain saturated and unsaturated beta-hydroxyacyl-ACPs. The protein is 3-hydroxyacyl-[acyl-carrier-protein] dehydratase FabZ of Shewanella denitrificans (strain OS217 / ATCC BAA-1090 / DSM 15013).